Here is an 890-residue protein sequence, read N- to C-terminus: Pentatricopeptide repeat-containing protein At3g57430, chloroplastic (890 aa).

The transit peptide at 1–44 (MSCPLAFTFSLPSIFPFPSQLLPFSRHKHPYLLRATPTSATEDV) directs the protein to the chloroplast. PPR repeat units lie at residues 61 to 95 (SPEWWIDLLRSKVRSNLLREAVLTYVDMIVLGIKP), 96 to 130 (DNYAFPALLKAVADLQDMELGKQIHAHVYKFGYGV), 132 to 162 (SVTVANTLVNLYRKCGDFGAVYKVFDRISER), 163 to 197 (NQVSWNSLISSLCSFEKWEMALEAFRCMLDENVEP), 198 to 231 (SSFTLVSVVTACSNLPMPEGLMMGKQVHAYGLRK), 235 to 265 (NSFIINTLVAMYGKLGKLASSKVLLGSFGGR), 266 to 300 (DLVTWNTVLSSLCQNEQLLEALEYLREMVLEGVEP), 301 to 335 (DEFTISSVLPACSHLEMLRTGKELHAYALKNGSLD), 337 to 371 (NSFVGSALVDMYCNCKQVLSGRRVFDGMFDRKIGL), 372 to 398 (WNAMIAGYSQNEHDKEALLLFIGMEES), 404 to 438 (NSTTMAGVVPACVRSGAFSRKEAIHGFVVKRGLDR), 439 to 473 (DRFVQNTLMDMYSRLGKIDIAMRIFGKMEDRDLVT), 474 to 504 (WNTMITGYVFSEHHEDALLLLHKMQNLERKV), 516 to 550 (NSITLMTILPSCAALSALAKGKEIHAYAIKNNLAT), 551 to 581 (DVAVGSALVDMYAKCGCLQMSRKVFDQIPQK), 582 to 616 (NVITWNVIIMAYGMHGNGQEAIDLLRMMMVQGVKP), 617 to 652 (NEVTFISVFAACSHSGMVDEGLRIFYVMKPDYGVEP), and 653 to 683 (SSDHYACVVDLLGRAGRIKEAYQLMNMMPRD). Positions 689-764 (AWSSLLGASR…EPGCSWIEHG (76 aa)) are type E motif. Residues 765-795 (DEVHKFVAGDSSHPQSEKLSGYLETLWERMR) form a type E(+) motif region. The interval 796–890 (KEGYVPDTSC…NGTCSCGDYW (95 aa)) is type DYW motif.

This sequence belongs to the PPR family. PCMP-H subfamily.

It localises to the plastid. The protein localises to the chloroplast. Its function is as follows. Involved in RNA editing events in chloroplasts. Required for the editing of a single site in ndhB and ndhF transcripts, which are two plastid-encoded subunits of the chloroplast NAD(P)H dehydrogenase (NDH) complex. Required for the editing of a single site in psbZ. Required for optimal activity of the NDH complex of the photosynthetic electron transport chain. The protein is Pentatricopeptide repeat-containing protein At3g57430, chloroplastic (PCMP-H81) of Arabidopsis thaliana (Mouse-ear cress).